Reading from the N-terminus, the 487-residue chain is Probable peptidoglycan glycosyltransferase FtsW (487 aa).

The next 9 membrane-spanning stretches (helical) occupy residues 30–50 (VSLI…VTSA), 71–91 (IYIV…MQWW), 93–113 (TSNA…LLVG), 122–142 (WLAI…FFFC), 167–187 (VVFF…TVVV), 203–223 (LWQF…LIMF), 282–302 (FIMA…VLAL), 332–352 (IGIW…GILP), and 358–378 (FPLL…VGLL). Disordered stretches follow at residues 398–419 (KAKA…SAGK) and 444–487 (IDSI…DGYV). Over residues 401–416 (ASTSSSRKNKPKTASS) the composition is skewed to polar residues. The segment covering 444–453 (IDSIMDDFAQ) has biased composition (acidic residues).

Belongs to the SEDS family. FtsW subfamily.

It is found in the cell inner membrane. The catalysed reaction is [GlcNAc-(1-&gt;4)-Mur2Ac(oyl-L-Ala-gamma-D-Glu-L-Lys-D-Ala-D-Ala)](n)-di-trans,octa-cis-undecaprenyl diphosphate + beta-D-GlcNAc-(1-&gt;4)-Mur2Ac(oyl-L-Ala-gamma-D-Glu-L-Lys-D-Ala-D-Ala)-di-trans,octa-cis-undecaprenyl diphosphate = [GlcNAc-(1-&gt;4)-Mur2Ac(oyl-L-Ala-gamma-D-Glu-L-Lys-D-Ala-D-Ala)](n+1)-di-trans,octa-cis-undecaprenyl diphosphate + di-trans,octa-cis-undecaprenyl diphosphate + H(+). Its pathway is cell wall biogenesis; peptidoglycan biosynthesis. Functionally, peptidoglycan polymerase that is essential for cell division. This chain is Probable peptidoglycan glycosyltransferase FtsW, found in Pseudoalteromonas atlantica (strain T6c / ATCC BAA-1087).